Reading from the N-terminus, the 88-residue chain is Small ribosomal subunit protein bS18 (88 aa).

A compositionally biased stretch (low complexity) spans Met-1 to Asn-11. The segment at Met-1–Ala-21 is disordered.

The protein belongs to the bacterial ribosomal protein bS18 family. Part of the 30S ribosomal subunit. Forms a tight heterodimer with protein bS6.

Binds as a heterodimer with protein bS6 to the central domain of the 16S rRNA, where it helps stabilize the platform of the 30S subunit. This is Small ribosomal subunit protein bS18 from Thermoanaerobacter pseudethanolicus (strain ATCC 33223 / 39E) (Clostridium thermohydrosulfuricum).